The chain runs to 80 residues: Cell division protein ZapB (80 aa).

Residues 3–80 (FEVFEKLEAK…ALLGKMNEVN (78 aa)) adopt a coiled-coil conformation.

Belongs to the ZapB family. As to quaternary structure, homodimer. The ends of the coiled-coil dimer bind to each other, forming polymers. Interacts with FtsZ.

It localises to the cytoplasm. Its function is as follows. Non-essential, abundant cell division factor that is required for proper Z-ring formation. It is recruited early to the divisome by direct interaction with FtsZ, stimulating Z-ring assembly and thereby promoting cell division earlier in the cell cycle. Its recruitment to the Z-ring requires functional FtsA or ZipA. The protein is Cell division protein ZapB of Edwardsiella ictaluri (strain 93-146).